A 196-amino-acid polypeptide reads, in one-letter code: Endoribonuclease YbeY (196 aa).

Residues His120, His124, and His130 each contribute to the Zn(2+) site.

It belongs to the endoribonuclease YbeY family. It depends on Zn(2+) as a cofactor.

Its subcellular location is the cytoplasm. Functionally, single strand-specific metallo-endoribonuclease involved in late-stage 70S ribosome quality control and in maturation of the 3' terminus of the 16S rRNA. The sequence is that of Endoribonuclease YbeY from Corynebacterium glutamicum (strain R).